Here is a 291-residue protein sequence, read N- to C-terminus: Quinol oxidase subunit 2 (291 aa).

The signal sequence occupies residues 1-28 (MQLKKAFWKLASLLPLSLLLFLGGCDKK). Helical transmembrane passes span 49 to 69 (SFLL…VILI) and 91 to 111 (LEII…IPTV).

The protein belongs to the cytochrome c oxidase subunit 2 family.

Its subcellular location is the cell membrane. The catalysed reaction is 2 a quinol + O2 = 2 a quinone + 2 H2O. Catalyzes quinol oxidation with the concomitant reduction of oxygen to water. Subunit II transfers the electrons from a quinol to the binuclear center of the catalytic subunit I. This chain is Quinol oxidase subunit 2, found in Bacillus anthracis.